Consider the following 293-residue polypeptide: MNVERDQHISPPCLLTKKIPIVDLSDPSDELVAHAVVKASEEWGIFQLVNHGIPAELMRRLQEVGRQFFELPASEKESVTRPADSQDIEGFFSKDPKKLKAWDDHLIHNIWPPSSINYRYWPNNPSDYSGDGFREVTKEYTRNVTNLTEKIVGGDKAQYVMRINYYPPSDSAIGAPAHTDFCGLALLVSNEVPGLQVFKDDHWFDVEYINSAVIVLIGDQIMRMSNGKYKNVLHRSIMDAKKTRMSWPILVEPKRGLVVGPLPELTGDENPPKFESLTFEDYVYRKIIKVLRD.

Residues 156 to 253 (KAQYVMRINY…RMSWPILVEP (98 aa)) form the Fe2OG dioxygenase domain. 164-166 (NYY) contributes to the 2-oxoglutarate binding site. 3 residues coordinate Fe cation: His-178, Asp-180, and His-234. 244–246 (RMS) contributes to the 2-oxoglutarate binding site.

It belongs to the iron/ascorbate-dependent oxidoreductase family. Fe(2+) is required as a cofactor.

It carries out the reaction a (2R,3R)-dihydroflavonol + 2-oxoglutarate + O2 = a flavonol + succinate + CO2 + H2O. The protein operates within secondary metabolite biosynthesis; flavonoid biosynthesis. The sequence is that of Probable flavonol synthase 6 (FLS6) from Arabidopsis thaliana (Mouse-ear cress).